We begin with the raw amino-acid sequence, 472 residues long: L-fuculokinase (472 aa).

This sequence belongs to the FGGY kinase family. It depends on a divalent metal cation as a cofactor.

It carries out the reaction L-fuculose + ATP = L-fuculose 1-phosphate + ADP + H(+). Its pathway is carbohydrate degradation; L-fucose degradation; L-lactaldehyde and glycerone phosphate from L-fucose: step 2/3. Its function is as follows. Catalyzes the phosphorylation of L-fuculose. Can also phosphorylate, with lower efficiency, D-ribulose, D-xylulose and D-fructose. The polypeptide is L-fuculokinase (Escherichia coli (strain K12)).